The chain runs to 149 residues: Protein SprT-like (149 aa).

The SprT-like domain maps to 6–147; sequence LQKLTEDISL…CGKCRGKIKR (142 aa). Position 67 (His67) interacts with Zn(2+). Residue Glu68 is part of the active site. His71 lines the Zn(2+) pocket.

The protein belongs to the SprT family. Zn(2+) is required as a cofactor.

The protein resides in the cytoplasm. The chain is Protein SprT-like from Bacillus velezensis (strain DSM 23117 / BGSC 10A6 / LMG 26770 / FZB42) (Bacillus amyloliquefaciens subsp. plantarum).